Reading from the N-terminus, the 64-residue chain is Large ribosomal subunit protein bL28 (64 aa).

The interval 1–21 (MAKKDQLTLRGPLYGNNRSHS) is disordered.

It belongs to the bacterial ribosomal protein bL28 family.

The sequence is that of Large ribosomal subunit protein bL28 from Mycoplasma genitalium (strain ATCC 33530 / DSM 19775 / NCTC 10195 / G37) (Mycoplasmoides genitalium).